The following is a 906-amino-acid chain: NACHT, LRR and PYD domains-containing protein 1b allele 4 (906 aa).

A disordered region spans residues 1 to 22 (MEESPPKQKSNTKVAQHEGQQD). Positions 126–435 (QLVIIEGAAG…EFFAAISCIL (310 aa)) constitute an NACHT domain. ATP is bound at residue 132–139 (GAAGIGKS). LRR repeat units lie at residues 627 to 647 (NLEG…QSLC) and 684 to 704 (SLTE…RMLC). Residues 789–906 (FWGPTGPVAT…FQEHGSRNAR (118 aa)) form the FIIND (incomplete) domain.

This sequence belongs to the NLRP family. As to expression, expressed in macrophages.

It localises to the cytoplasm. It is found in the cytosol. Its function is as follows. Probable inactive allele of Nlrp1b, which lacks a CARD domain, suggesting that it is not able to form an inflammasome. Contrary to Nlrp1b allele 1, allele 4 is not activated by B.anthracis lethal toxin and no other activation signal is reported. The polypeptide is NACHT, LRR and PYD domains-containing protein 1b allele 4 (Mus musculus (Mouse)).